The chain runs to 655 residues: DNA mismatch repair protein MutL (655 aa).

Disordered regions lie at residues 357 to 416 and 439 to 460; these read EKKQ…DDYT and DFDS…SKDP. A compositionally biased stretch (basic and acidic residues) spans 371 to 383; sequence SHEEDEKNDDKAY. Residues 402–416 show a composition bias toward polar residues; the sequence is NTSVSTSPNSDDDYT.

This sequence belongs to the DNA mismatch repair MutL/HexB family.

Functionally, this protein is involved in the repair of mismatches in DNA. It is required for dam-dependent methyl-directed DNA mismatch repair. May act as a 'molecular matchmaker', a protein that promotes the formation of a stable complex between two or more DNA-binding proteins in an ATP-dependent manner without itself being part of a final effector complex. This chain is DNA mismatch repair protein MutL, found in Staphylococcus saprophyticus subsp. saprophyticus (strain ATCC 15305 / DSM 20229 / NCIMB 8711 / NCTC 7292 / S-41).